The primary structure comprises 299 residues: tRNA dimethylallyltransferase (299 aa).

13–20 (GATASGKT) contributes to the ATP binding site. 15–20 (TASGKT) is a substrate binding site. Positions 38–41 (DSRQ) are interaction with substrate tRNA.

This sequence belongs to the IPP transferase family. Monomer. The cofactor is Mg(2+).

It carries out the reaction adenosine(37) in tRNA + dimethylallyl diphosphate = N(6)-dimethylallyladenosine(37) in tRNA + diphosphate. Its function is as follows. Catalyzes the transfer of a dimethylallyl group onto the adenine at position 37 in tRNAs that read codons beginning with uridine, leading to the formation of N6-(dimethylallyl)adenosine (i(6)A). The protein is tRNA dimethylallyltransferase of Prochlorococcus marinus (strain MIT 9312).